Consider the following 492-residue polypeptide: Putative protein disulfide-isomerase C1F5.02 (492 aa).

The first 22 residues, 1–22 (MKISNLLAAFLAFSGGFFCASA), serve as a signal peptide directing secretion. Residues 23–128 (EVPKVNKEGL…LVKYMRKQLL (106 aa)) form the Thioredoxin 1 domain. Residues Cys-51 and Cys-54 each act as nucleophile in the active site. Cysteines 51 and 54 form a disulfide. N-linked (GlcNAc...) asparagine glycans are attached at residues Asn-161 and Asn-257. One can recognise a Thioredoxin 2 domain in the interval 323–462 (ELTAKAMTKF…LSAFIDKHAS (140 aa)). Active-site nucleophile residues include Cys-385 and Cys-388. Residues Cys-385 and Cys-388 are joined by a disulfide bond. A disordered region spans residues 468 to 492 (KEKESVPAPDLEDQVAVEDEMADEL). Positions 477–492 (DLEDQVAVEDEMADEL) are enriched in acidic residues. The Prevents secretion from ER motif lies at 489 to 492 (ADEL).

It belongs to the protein disulfide isomerase family.

Its subcellular location is the endoplasmic reticulum lumen. It catalyses the reaction Catalyzes the rearrangement of -S-S- bonds in proteins.. Participates in the folding of proteins containing disulfide bonds, may be involved in glycosylation, prolyl hydroxylation and triglyceride transfer. The protein is Putative protein disulfide-isomerase C1F5.02 of Schizosaccharomyces pombe (strain 972 / ATCC 24843) (Fission yeast).